Here is a 261-residue protein sequence, read N- to C-terminus: MSSKPLILVTNDDGVHAKGIRHLWQSIQDLADLIIVAPQQEQSAVSLSITVRRPLHIEKVDWLNAQADVWSVNGTPADCVKLALNVVLPKRPQLIVSGINRGTNAGRNIFYSGTVAAIMEGVMQGIPGIAFSYGDYFNPSYHLIESFIPGIVNYALQNAMQEGTFLNVNFPKTEHGPIKGIRLTTQGKEYWAENPEKRQHPAEQNSYYWLGSKLAEYDEREDSDIFLLRKGFATVVPLHIGDLTNHSHLLKEKLAFETFVN.

A divalent metal cation-binding residues include Asp-12, Asp-13, Ser-43, and Asn-100.

The protein belongs to the SurE nucleotidase family. It depends on a divalent metal cation as a cofactor.

It localises to the cytoplasm. It carries out the reaction a ribonucleoside 5'-phosphate + H2O = a ribonucleoside + phosphate. Its function is as follows. Nucleotidase that shows phosphatase activity on nucleoside 5'-monophosphates. This Protochlamydia amoebophila (strain UWE25) protein is 5'-nucleotidase SurE.